Consider the following 433-residue polypeptide: Phosphomethylpyrimidine synthase (433 aa).

Substrate is bound by residues Asn69, Met98, Tyr127, His163, 185–187 (SRG), 226–229 (DALR), and Glu265. His269 is a Zn(2+) binding site. Position 292 (Tyr292) interacts with substrate. Position 333 (His333) interacts with Zn(2+). Positions 409, 412, and 416 each coordinate [4Fe-4S] cluster.

Belongs to the ThiC family. It depends on [4Fe-4S] cluster as a cofactor.

The catalysed reaction is 5-amino-1-(5-phospho-beta-D-ribosyl)imidazole + S-adenosyl-L-methionine = 4-amino-2-methyl-5-(phosphooxymethyl)pyrimidine + CO + 5'-deoxyadenosine + formate + L-methionine + 3 H(+). It functions in the pathway cofactor biosynthesis; thiamine diphosphate biosynthesis. Functionally, catalyzes the synthesis of the hydroxymethylpyrimidine phosphate (HMP-P) moiety of thiamine from aminoimidazole ribotide (AIR) in a radical S-adenosyl-L-methionine (SAM)-dependent reaction. This Finegoldia magna (strain ATCC 29328 / DSM 20472 / WAL 2508) (Peptostreptococcus magnus) protein is Phosphomethylpyrimidine synthase.